The following is a 234-amino-acid chain: Opacity protein opA56 (234 aa).

Residue alanine 1 is a signal peptide.

This sequence belongs to the opacity porin family.

The protein resides in the cell outer membrane. Implicated in a number of adherence functions. OPA proteins are implicated in pathogenesis and are subject to phase variation. The protein is Opacity protein opA56 (opaF) of Neisseria gonorrhoeae.